Consider the following 460-residue polypeptide: Protein Peter pan (460 aa).

The region spanning 28–290 (PHSFVIHRGL…LIKIEEGLLT (263 aa)) is the Brix domain. A phosphoserine mark is found at serine 237 and serine 239. A coiled-coil region spans residues 295–350 (YHDHVVKTEDEKETLRKLVEKKRKQKEQRKKEQAENRARNLKLKKDEKWAAKRAAE). Residues 315 to 460 (KKRKQKEQRK…FDHRKSRKSK (146 aa)) form a disordered region. 2 stretches are compositionally biased toward basic and acidic residues: residues 323 to 355 (RKKE…RTDS) and 401 to 446 (AKLD…DPKN). The residue at position 353 (threonine 353) is a Phosphothreonine. A Phosphoserine modification is found at serine 355. Basic residues predominate over residues 447–460 (KRAKFDHRKSRKSK).

It belongs to the PPAN family. As to expression, ubiquitous.

Functionally, required for initiation of larval growth and normal mitotic growth but is not absolutely required for general biosynthesis or DNA replication. Required for progression of normal oogenesis and maturation of some imaginal tissues into adult structures. The sequence is that of Protein Peter pan (ppan) from Drosophila melanogaster (Fruit fly).